Here is a 97-residue protein sequence, read N- to C-terminus: Putative septation protein SpoVG (97 aa).

The protein belongs to the SpoVG family.

In terms of biological role, could be involved in septation. This chain is Putative septation protein SpoVG, found in Anaeromyxobacter sp. (strain Fw109-5).